The chain runs to 481 residues: MVGVTPEPRTLAEKVWASHVVRSADGEPDLLFIDLHLLHEVTSPQAFDGLRLAGRRVRRTDLTIATEDHNTPTGYADPSYQSRRGDLLTITDPTSRTQIETLRRNCAEFGVRLHPLGDENQGIVHVIGPQLGLTQPGMTIVCGDSHTATHGAFGALAFGIGTSEVEHVLATQTLPQARPRTMAVNVVGDLAPGVTAKDLVLALIAQVGTGGGRGHVVEYRGEAIRKLSMEGRMTIANMSIEWGAKAGLIAPDDTTFGYLRGRPNAPAGADWEAAVAYWRTLPTDAGATFDSEVTLDASQITPFVTWGTNPGQGASLDASVPNPEEFATEPERAAARRALEYMDLAVGTPLRELTVDVVFVGSCTNGRIEDLRAAADVLRGRRVAPGVRMLVVPGSAAVRENAEAEGLDKVFTEAGAEWRFAGCSMCLGMNPDTLRPGQRAASTSNRNFEGRQGRGGRTHLVSPPVAAATAVTGRLAAPADL.

Residues C363, C423, and C426 each coordinate [4Fe-4S] cluster. The segment at 434-465 (LRPGQRAASTSNRNFEGRQGRGGRTHLVSPPV) is disordered.

Belongs to the aconitase/IPM isomerase family. LeuC type 1 subfamily. Heterodimer of LeuC and LeuD. [4Fe-4S] cluster serves as cofactor.

The catalysed reaction is (2R,3S)-3-isopropylmalate = (2S)-2-isopropylmalate. It participates in amino-acid biosynthesis; L-leucine biosynthesis; L-leucine from 3-methyl-2-oxobutanoate: step 2/4. Its function is as follows. Catalyzes the isomerization between 2-isopropylmalate and 3-isopropylmalate, via the formation of 2-isopropylmaleate. This chain is 3-isopropylmalate dehydratase large subunit, found in Salinispora tropica (strain ATCC BAA-916 / DSM 44818 / JCM 13857 / NBRC 105044 / CNB-440).